A 207-amino-acid chain; its full sequence is Large ribosomal subunit protein uL4 (207 aa).

The segment at 44–78 (QRQGTHDVKNRSEVRGGGRKPWRQKGTGRARQGSI) is disordered. Positions 47–59 (GTHDVKNRSEVRG) are enriched in basic and acidic residues. The span at 60-71 (GGRKPWRQKGTG) shows a compositional bias: basic residues.

The protein belongs to the universal ribosomal protein uL4 family. In terms of assembly, part of the 50S ribosomal subunit.

Its function is as follows. One of the primary rRNA binding proteins, this protein initially binds near the 5'-end of the 23S rRNA. It is important during the early stages of 50S assembly. It makes multiple contacts with different domains of the 23S rRNA in the assembled 50S subunit and ribosome. Forms part of the polypeptide exit tunnel. This chain is Large ribosomal subunit protein uL4, found in Brevibacillus brevis (strain 47 / JCM 6285 / NBRC 100599).